The chain runs to 339 residues: Large ribosomal subunit protein uL10 (339 aa).

The tract at residues 305–339 (TQPQQEEKVEEAEEEEEEEEASEEDALAGLGALFG) is disordered. Residues 312-330 (KVEEAEEEEEEEEASEEDA) are compositionally biased toward acidic residues.

Belongs to the universal ribosomal protein uL10 family. As to quaternary structure, part of the 50S ribosomal subunit. Forms part of the ribosomal stalk which helps the ribosome interact with GTP-bound translation factors. Forms a heptameric L10(L12)2(L12)2(L12)2 complex, where L10 forms an elongated spine to which the L12 dimers bind in a sequential fashion.

Functionally, forms part of the ribosomal stalk, playing a central role in the interaction of the ribosome with GTP-bound translation factors. The protein is Large ribosomal subunit protein uL10 of Thermococcus onnurineus (strain NA1).